A 354-amino-acid chain; its full sequence is Homeobox protein Nkx-2.4 (354 aa).

Residues 188–247 (RRKRRVLFSQAQVYELERRFKQQKYLSAPEREHLASMIHLTPTQVKIWFQNHRYKMKRQA) constitute a DNA-binding region (homeobox). The interval 245–329 (RQAKDKAAQQ…PALHGPGGGL (85 aa)) is disordered. Pro residues predominate over residues 262 to 272 (GPPPPPPPPSP). Residues 290–304 (GAGTPTPGQGGQQPQ) are compositionally biased toward low complexity.

This sequence belongs to the NK-2 homeobox family. As to expression, in the embryo it is detected in the posterior hypothalamus and later in the head. In the adult it is detected only in testis.

The protein resides in the nucleus. Its function is as follows. Probable transcription factor. The chain is Homeobox protein Nkx-2.4 (Nkx2-4) from Mus musculus (Mouse).